The chain runs to 157 residues: MLLTGKLYKEEKQKFYDAQNGKCLICQRELNPDVQANHLDHDHELNGPKAGKVRGLLCNLCNAAEGQMKHKFNRSGLKGQGVDYLEWLENLLTYLKSDYTQNNIHPNFVGDKSKEFSRLGKEEMMAEMLQRGFEYNESDTKTQLIASFKKQLRKSLK.

Zn(2+) contacts are provided by Cys23 and Cys26. Asp40 lines the Ca(2+) pocket. Residues Cys58 and Cys61 each coordinate Zn(2+). Ca(2+) is bound at residue Asn62.

In terms of assembly, homodimer. The cofactor is Ca(2+). Zn(2+) is required as a cofactor.

Functionally, cleaves DNA cruciform and Y-structures as well as heteroduplex loops. Resolves Holliday junctions, recognizes a broad spectrum of DNA substrates ranging from branched DNAs to single base mismatches. In Enterobacteria phage T4 (Bacteriophage T4), this protein is Recombination endonuclease VII (49).